The chain runs to 231 residues: Lytic polysaccharide monooxygenase-like protein X325 (231 aa).

A signal peptide spans 1–17 (MRLSLLVTLALTALIEA). H18 lines the Cu(2+) pocket. N34, N55, N98, N133, N174, and N180 each carry an N-linked (GlcNAc...) asparagine glycan. 2 cysteine pairs are disulfide-bonded: C47-C157 and C122-C178. Residue I202 is the site of GPI-anchor amidated isoleucine attachment. Positions 203 to 231 (ASTTTGSAPRYYSWAGWLPLVAGAIWMAL) are cleaved as a propeptide — removed in mature form.

The protein belongs to the X325 family. Cu(2+) serves as cofactor.

The protein resides in the cell membrane. Functionally, lytic polysaccharide monooxygenase-like protein that has diverged to biological functions other than polysaccharide degradation since it does not perform oxidative cleavage of polysaccharides. Acts as a cell surface-bound protein that functions in the copper-accumulation pathway. May also act as the major cell wall sensor that regulates MAP kinase-dependent hyphal anastomosis, the fusion of hyphal cells. The sequence is that of Lytic polysaccharide monooxygenase-like protein X325 from Hypocrea jecorina (strain QM6a) (Trichoderma reesei).